Here is a 133-residue protein sequence, read N- to C-terminus: Small ribosomal subunit protein uS11 (133 aa).

This sequence belongs to the universal ribosomal protein uS11 family. Part of the 30S ribosomal subunit.

Functionally, located on the platform of the 30S subunit. This is Small ribosomal subunit protein uS11 from Aeropyrum pernix (strain ATCC 700893 / DSM 11879 / JCM 9820 / NBRC 100138 / K1).